The chain runs to 267 residues: Phosphate import ATP-binding protein PstB 2 (267 aa).

The 242-residue stretch at 21-262 folds into the ABC transporter domain; sequence LSTKDVHVYY…AKLQSTNDYV (242 aa). Residue 53 to 60 participates in ATP binding; it reads GPSGSGKS.

Belongs to the ABC transporter superfamily. Phosphate importer (TC 3.A.1.7) family. In terms of assembly, the complex is composed of two ATP-binding proteins (PstB), two transmembrane proteins (PstC and PstA) and a solute-binding protein (PstS).

The protein resides in the cell membrane. It catalyses the reaction phosphate(out) + ATP + H2O = ADP + 2 phosphate(in) + H(+). Functionally, part of the ABC transporter complex PstSACB involved in phosphate import. Responsible for energy coupling to the transport system. The chain is Phosphate import ATP-binding protein PstB 2 from Streptococcus pneumoniae serotype 4 (strain ATCC BAA-334 / TIGR4).